The following is a 64-amino-acid chain: Palmitoyl-CoA hydrolase (64 aa).

Belongs to the type-B carboxylesterase/lipase family. Monomer and homotrimer.

The protein resides in the microsome. Its subcellular location is the endoplasmic reticulum. The catalysed reaction is hexadecanoyl-CoA + H2O = hexadecanoate + CoA + H(+). Functionally, hydrolysis of a variety of CoA thioesters of long-chain fatty acids. This is Palmitoyl-CoA hydrolase from Rattus norvegicus (Rat).